A 48-amino-acid polypeptide reads, in one-letter code: Osteocalcin (48 aa).

One can recognise a Gla domain in the interval 1–46 (SFAVGSSYGAAPDPLEAQREVCELNPDCDELADHIGFQEAYRRFYG). Ca(2+) is bound by residues E16, E20, E23, and D29. A 4-carboxyglutamate mark is found at E16, E20, and E23. C22 and C28 are oxidised to a cystine.

Belongs to the osteocalcin/matrix Gla protein family. In terms of processing, gamma-carboxyglutamate residues are formed by vitamin K dependent carboxylation by GGCX. These residues are essential for the binding of calcium.

It is found in the secreted. In terms of biological role, the carboxylated form is one of the main organic components of the bone matrix, which constitutes 1-2% of the total bone protein. The carboxylated form binds strongly to apatite and calcium. In Dromaius novaehollandiae (Emu), this protein is Osteocalcin (BGLAP).